Consider the following 62-residue polypeptide: Large ribosomal subunit protein eL24 (62 aa).

4 residues coordinate Zn(2+): C7, C10, C33, and C37. Residues 7–37 form a C4-type zinc finger; sequence CSFCGREIEPGTGIMYVKNDGSILWFCSRKC.

This sequence belongs to the eukaryotic ribosomal protein eL24 family. Part of the 50S ribosomal subunit. Forms a cluster with proteins L3 and L14. The cofactor is Zn(2+).

Functionally, binds to the 23S rRNA. The sequence is that of Large ribosomal subunit protein eL24 from Staphylothermus marinus (strain ATCC 43588 / DSM 3639 / JCM 9404 / F1).